A 95-amino-acid polypeptide reads, in one-letter code: Putative per-hexamer repeat protein 4 (95 aa).

In Mus musculus (Mouse), this protein is Putative per-hexamer repeat protein 4 (Phxr4).